The sequence spans 99 residues: Large ribosomal subunit protein uL23 (99 aa).

This sequence belongs to the universal ribosomal protein uL23 family. As to quaternary structure, part of the 50S ribosomal subunit. Contacts protein L29, and trigger factor when it is bound to the ribosome.

One of the early assembly proteins it binds 23S rRNA. One of the proteins that surrounds the polypeptide exit tunnel on the outside of the ribosome. Forms the main docking site for trigger factor binding to the ribosome. The sequence is that of Large ribosomal subunit protein uL23 from Xanthomonas campestris pv. campestris (strain B100).